Here is a 247-residue protein sequence, read N- to C-terminus: ATP synthase subunit a, chloroplastic (247 aa).

A run of 5 helical transmembrane segments spans residues 38–58 (QVLITSWVVIAILLGSAAIAV), 95–115 (VPFIGTMFLFIFVSNWSGALL), 134–154 (INTTVALALLTSVAYFYAGLT), 199–219 (LVVVVLVSLVPLVVPIPVMFL), and 220–240 (GLFTSGIQALIFATLAAAYIG).

It belongs to the ATPase A chain family. In terms of assembly, F-type ATPases have 2 components, CF(1) - the catalytic core - and CF(0) - the membrane proton channel. CF(1) has five subunits: alpha(3), beta(3), gamma(1), delta(1), epsilon(1). CF(0) has four main subunits: a, b, b' and c.

It localises to the plastid. Its subcellular location is the chloroplast thylakoid membrane. Its function is as follows. Key component of the proton channel; it plays a direct role in the translocation of protons across the membrane. The polypeptide is ATP synthase subunit a, chloroplastic (Calycanthus floridus var. glaucus (Eastern sweetshrub)).